A 420-amino-acid polypeptide reads, in one-letter code: Chaperone protein dnaJ 3 (420 aa).

Positions 14–75 constitute a J domain; it reads KFYEILGVPK…EKREIYDQYG (62 aa). The segment at 135-219 adopts a CR-type zinc-finger fold; it reads GTMKKLSLSR…CKGDKVIPEK (85 aa). Residues Cys-148, Cys-151, Cys-164, Cys-167, Cys-191, Cys-194, Cys-207, and Cys-210 each coordinate Zn(2+). CXXCXGXG motif repeat units follow at residues 148-155, 164-171, 191-198, and 207-214; these read CSKCNGKG, CGGCQGSG, CNECKGTG, and CPQCKGDK. A disordered region spans residues 376–420; it reads ETTLHDVNIEDEMRRKAQAQREAYDDDDEDDDHPGGAQRVQCAQQ. The span at 377–390 shows a compositional bias: basic and acidic residues; the sequence is TTLHDVNIEDEMRR. Position 417 is a cysteine methyl ester (Cys-417). Residue Cys-417 is the site of S-farnesyl cysteine attachment. Residues 418–420 constitute a propeptide, removed in mature form; that stretch reads AQQ.

This sequence belongs to the DnaJ family. A/I subfamily. In terms of assembly, homodimer. Requires Zn(2+) as cofactor. Post-translationally, farnesylated. In terms of tissue distribution, roots, shoots, flowers, siliques and cotyledons.

It localises to the membrane. Its function is as follows. Plays a continuous role in plant development probably in the structural organization of compartments. The polypeptide is Chaperone protein dnaJ 3 (ATJ3) (Arabidopsis thaliana (Mouse-ear cress)).